The following is a 237-amino-acid chain: RNA polymerase sigma-28 factor (237 aa).

Residues 1–19 (MSLFAAIGYMVREVFVFVS) constitute a propeptide that is removed on maturation. The Polymerase core binding signature appears at 77-90 (DLISIGTIGLIKAI). Residues 197 to 206 (QREIAKALGI) constitute a DNA-binding region (H-T-H motif).

Belongs to the sigma-70 factor family. Proteolytically cleaved in the N-terminus probably by a SpoIIGA homolog to yield the active peptide.

Sigma factors are initiation factors that promote the attachment of RNA polymerase to specific initiation sites and are then released. This sigma factor directs the transcription of crystal protein genes, a sporulation-regulated event. This chain is RNA polymerase sigma-28 factor (sigK), found in Bacillus thuringiensis subsp. kurstaki.